Reading from the N-terminus, the 194-residue chain is Endoribonuclease ToxN (194 aa).

The stretch at 114–182 forms a coiled coil; sequence MLKQYLFLKE…DQAKERDKAR (69 aa). Over residues 171–182 the composition is skewed to basic and acidic residues; that stretch reads ERDQAKERDKAR. The segment at 171 to 194 is disordered; that stretch reads ERDQAKERDKARRIAYMRQMGRER.

This sequence belongs to the ToxN/AbiQ toxin family. As to quaternary structure, one ToxN monomer binds to a 34-nt-long single repeat of the ToxI RNA; this complex forms a triangular heterohexameric complex with ToxN connected by the ToxI RNA to another toxin molecule. The ToxI repeats are cleavage products of their precursor. The ToxI repeat forms a pseudoknot which occludes the toxin active site.

In terms of biological role, toxic component of a type III toxin-antitoxin (TA) system. An endoribonuclease which cleaves between the first and second A of AAAAA sequences; it tolerates other nucleotides in positions +2 and +4 of the consensus. Digests cognate antitoxin RNA ToxI as shown by the 2'-3'-cyclic phosphate at the 3' end of the 34-nt repeats and probably other RNAs. Inhibits growth when expressed in E.coli without causing cell lysis; this bacteriostatic effect is neutralized by cognate RNA antitoxin ToxI, which has 2.9 nearly identical 34 nucleotide-long repeats. Non-cognate antitoxin RNA from P.atrosepticum does not inhibit this toxin. The toxin-antitoxin pair function in plasmid maintenance (a plasmid addiction system), but unlike its P.atrosepticum homolog it is not seen to confer resistance to bacteriophages. This chain is Endoribonuclease ToxN, found in Bacillus thuringiensis subsp. kurstaki.